Here is a 587-residue protein sequence, read N- to C-terminus: RuBisCO large subunit-binding protein subunit alpha, chloroplastic (587 aa).

Residues 1–25 show a composition bias toward polar residues; sequence MASTNALSSTSILRSPTNQAQTSLS. The interval 1–33 is disordered; sequence MASTNALSSTSILRSPTNQAQTSLSKKVKQHGR. A chloroplast-targeting transit peptide spans 1-47; the sequence is MASTNALSSTSILRSPTNQAQTSLSKKVKQHGRVNFRQKPNRFVVKA.

This sequence belongs to the chaperonin (HSP60) family. Oligomer of probably six alpha and six beta subunits.

It localises to the plastid. It is found in the chloroplast. Its function is as follows. This protein binds RuBisCO small and large subunits and is implicated in the assembly of the enzyme oligomer. The protein is RuBisCO large subunit-binding protein subunit alpha, chloroplastic of Pisum sativum (Garden pea).